The sequence spans 251 residues: MRILVSNDDGIFSPGIKALGLAMRALGEVFVVAPDMEQSAVGHGITVRRPLRFKHTQSAGFGEIPAYRVDGTPADCVVLGVHLLGRPDLVVSGINLGVNLGLDLTHSGTVAAALEGASLGIPSIAFSLDTSGEVLDFQEAARWALAIARAVGERGLPPGVLLNVNFPASRPKGLLVTRLSTHRFEDQVVERLDPEGKPYYWIAGTPAGEEEEGTDLWAVRRGYVSVTPVSLDLTAHGFLEALSGLLEGVAP.

Positions 8, 9, 39, and 95 each coordinate a divalent metal cation.

It belongs to the SurE nucleotidase family. A divalent metal cation serves as cofactor.

The protein localises to the cytoplasm. It catalyses the reaction a ribonucleoside 5'-phosphate + H2O = a ribonucleoside + phosphate. Nucleotidase that shows phosphatase activity on nucleoside 5'-monophosphates. The polypeptide is 5'-nucleotidase SurE 1 (Thermus thermophilus (strain ATCC BAA-163 / DSM 7039 / HB27)).